A 443-amino-acid chain; its full sequence is 3-phosphoshikimate 1-carboxyvinyltransferase (443 aa).

3 residues coordinate 3-phosphoshikimate: Lys24, Ser25, and Arg29. Lys24 serves as a coordination point for phosphoenolpyruvate. Phosphoenolpyruvate contacts are provided by Gly95 and Arg123. The 3-phosphoshikimate site is built by Ser167, Gln169, Asp323, and Lys350. Phosphoenolpyruvate is bound at residue Gln169. Catalysis depends on Asp323, which acts as the Proton acceptor. Phosphoenolpyruvate contacts are provided by Arg354 and Arg398.

It belongs to the EPSP synthase family. Monomer.

It localises to the cytoplasm. The enzyme catalyses 3-phosphoshikimate + phosphoenolpyruvate = 5-O-(1-carboxyvinyl)-3-phosphoshikimate + phosphate. It participates in metabolic intermediate biosynthesis; chorismate biosynthesis; chorismate from D-erythrose 4-phosphate and phosphoenolpyruvate: step 6/7. In terms of biological role, catalyzes the transfer of the enolpyruvyl moiety of phosphoenolpyruvate (PEP) to the 5-hydroxyl of shikimate-3-phosphate (S3P) to produce enolpyruvyl shikimate-3-phosphate and inorganic phosphate. This Caulobacter vibrioides (strain ATCC 19089 / CIP 103742 / CB 15) (Caulobacter crescentus) protein is 3-phosphoshikimate 1-carboxyvinyltransferase.